The sequence spans 367 residues: Tubulin-like protein CetZ (367 aa).

GTP-binding positions include Q11 to R15, S111, G115 to G117, E148, N176, and N194.

Belongs to the CetZ family.

Its subcellular location is the cytoplasm. Functionally, involved in cell shape control. The chain is Tubulin-like protein CetZ from Methanothrix thermoacetophila (strain DSM 6194 / JCM 14653 / NBRC 101360 / PT) (Methanosaeta thermophila).